The chain runs to 147 residues: Acidic phospholipase A2 S3-24 (147 aa).

Positions 1 to 19 (MYPAHLLVLLAVCVSLLGA) are cleaved as a signal peptide. Residues 20-27 (SDMPPQPL) constitute a propeptide that is removed on maturation. 7 cysteine pairs are disulfide-bonded: C38-C99, C54-C146, C56-C72, C71-C127, C78-C120, C88-C113, and C106-C118. Residues Y55, G57, and G59 each contribute to the Ca(2+) site. H75 is a catalytic residue. A Ca(2+)-binding site is contributed by D76. D121 is a catalytic residue.

Belongs to the phospholipase A2 family. Group I subfamily. D49 sub-subfamily. The cofactor is Ca(2+). Expressed by the venom gland.

It localises to the secreted. The catalysed reaction is a 1,2-diacyl-sn-glycero-3-phosphocholine + H2O = a 1-acyl-sn-glycero-3-phosphocholine + a fatty acid + H(+). Snake venom phospholipase A2 (PLA2) that inhibits collagen-induced platelet aggregation. PLA2 catalyzes the calcium-dependent hydrolysis of the 2-acyl groups in 3-sn-phosphoglycerides. The sequence is that of Acidic phospholipase A2 S3-24 from Austrelaps superbus (Lowland copperhead snake).